The sequence spans 369 residues: Anhydro-N-acetylmuramic acid kinase (369 aa).

Residue 11 to 18 coordinates ATP; it reads GTSMDAVD.

The protein belongs to the anhydro-N-acetylmuramic acid kinase family.

The enzyme catalyses 1,6-anhydro-N-acetyl-beta-muramate + ATP + H2O = N-acetyl-D-muramate 6-phosphate + ADP + H(+). The protein operates within amino-sugar metabolism; 1,6-anhydro-N-acetylmuramate degradation. Its pathway is cell wall biogenesis; peptidoglycan recycling. Catalyzes the specific phosphorylation of 1,6-anhydro-N-acetylmuramic acid (anhMurNAc) with the simultaneous cleavage of the 1,6-anhydro ring, generating MurNAc-6-P. Is required for the utilization of anhMurNAc either imported from the medium or derived from its own cell wall murein, and thus plays a role in cell wall recycling. This is Anhydro-N-acetylmuramic acid kinase from Idiomarina loihiensis (strain ATCC BAA-735 / DSM 15497 / L2-TR).